Consider the following 599-residue polypeptide: Aspartate--tRNA(Asp/Asn) ligase (599 aa).

E172 lines the L-aspartate pocket. The interval 196 to 199 (QLFK) is aspartate. Residue R218 participates in L-aspartate binding. ATP contacts are provided by residues 218–220 (RDE) and Q227. Position 451 (H451) interacts with L-aspartate. ATP is bound at residue E485. Residue R492 participates in L-aspartate binding. ATP is bound at residue 537–540 (GLDR).

This sequence belongs to the class-II aminoacyl-tRNA synthetase family. Type 1 subfamily. In terms of assembly, homodimer.

The protein resides in the cytoplasm. The enzyme catalyses tRNA(Asx) + L-aspartate + ATP = L-aspartyl-tRNA(Asx) + AMP + diphosphate. Its function is as follows. Aspartyl-tRNA synthetase with relaxed tRNA specificity since it is able to aspartylate not only its cognate tRNA(Asp) but also tRNA(Asn). Reaction proceeds in two steps: L-aspartate is first activated by ATP to form Asp-AMP and then transferred to the acceptor end of tRNA(Asp/Asn). The sequence is that of Aspartate--tRNA(Asp/Asn) ligase from Aromatoleum aromaticum (strain DSM 19018 / LMG 30748 / EbN1) (Azoarcus sp. (strain EbN1)).